Reading from the N-terminus, the 632-residue chain is Palmitoyltransferase ZDHHC17 (632 aa).

Residues 1-304 (MQREEGFNTK…LKADKEFRQK (304 aa)) lie on the Cytoplasmic side of the membrane. A necessary and sufficient for interaction with DNAJC5 and SNAP25 region spans residues 11–305 (MADGPDEYET…KADKEFRQKV (295 aa)). ANK repeat units lie at residues 51-86 (THID…VRQP), 89-118 (ENVT…IVDQ), 123-152 (LNST…DPSL), 156-185 (EGCS…DVDM), 189-219 (NGMT…SVNL), 224-253 (HKNT…NVDA), and 257-286 (KGES…AKGY). The next 2 membrane-spanning stretches (helical) occupy residues 305–325 (VMLG…DLDI) and 326–346 (DSWL…QFLS). The Cytoplasmic portion of the chain corresponds to 347-357 (KSFFDHSMHSA). Residues 358 to 378 (LPLGIYLATKFWMYVTWFFWF) form a helical membrane-spanning segment. Topologically, residues 379 to 381 (WND) are lumenal. The chain crosses the membrane as a helical span at residues 382-402 (LNFLFIHLPFLANSVALFYNF). Residues 403–480 (GKSWKSDPGI…GNCVGAGNHR (78 aa)) lie on the Cytoplasmic side of the membrane. The DHHC domain maps to 437–487 (IFCSTCLIRKPVRSKHCGVCNRCIAKFDHHCPWVGNCVGAGNHRYFMGYLF). Cys-467 functions as the S-palmitoyl cysteine intermediate in the catalytic mechanism. A helical membrane pass occupies residues 481–501 (YFMGYLFFLLFMICWMIYGCV). Topologically, residues 502 to 529 (SYWGLHCETTYTKDGFWTYITQIATCSP) are lumenal. Residues 530 to 550 (WMFWMFLNSVFHFLWVAVLLM) traverse the membrane as a helical segment. Residues 551–632 (CQLYQITCLG…QISGSGYQLV (82 aa)) are Cytoplasmic-facing.

The protein belongs to the DHHC palmitoyltransferase family. AKR/ZDHHC17 subfamily. Interacts (via ANK repeats) with numerous proteins (via the consensus sequence motif [VIAP]-[VIT]-x-x-Q-P). Interacts (via ANK repeats) with CLIP3. Interacts (via ANK repeats) with HTT. Interacts (via ANK repeats) with DNAJC5 (via C-terminus). Interacts (via ANK repeats) with MAP6. Interacts (via ANK repeats) with SNAP23. Interacts (via ANK repeats) with SNAP25. Interacts (via ANK repeats) with EVL. Interacts with SPRED1 and SPRED3. Interacts with GPM6A and OPTN. May interact (via ANK repeats) with SPRED2. May interact with NTRK1; may regulate its localization and function. Autopalmitoylated. Autopalmitoylation has a regulatory role in ZDHHC17-mediated Mg(2+) transport. As to expression, expressed in liver, testis, kidney, heart, pancreas and brain. Highest expression was seen in the brain. Localized predominantly in the perinuclear regions of neurons from the cortex, striatum and hippocampus. Colocalized with HTT in the medium spiny neurons of the striatum and the spiny neurons that project into the globus pallidus.

It is found in the golgi apparatus membrane. Its subcellular location is the cytoplasmic vesicle membrane. It localises to the presynaptic cell membrane. The catalysed reaction is L-cysteinyl-[protein] + hexadecanoyl-CoA = S-hexadecanoyl-L-cysteinyl-[protein] + CoA. The enzyme catalyses L-cysteinyl-[protein] + tetradecanoyl-CoA = S-tetradecanoyl-L-cysteinyl-[protein] + CoA. It carries out the reaction L-cysteinyl-[protein] + octadecanoyl-CoA = S-octadecanoyl-L-cysteinyl-[protein] + CoA. In terms of biological role, palmitoyltransferase that catalyzes the addition of palmitate onto various protein substrates and is involved in a variety of cellular processes. Has no stringent fatty acid selectivity and in addition to palmitate can also transfer onto target proteins myristate from tetradecanoyl-CoA and stearate from octadecanoyl-CoA. Palmitoyltransferase specific for a subset of neuronal proteins, including SNAP25, DLG4/PSD95, GAD2, SYT1 and HTT. Also palmitoylates neuronal protein GPM6A as well as SPRED1 and SPRED3. Could also play a role in axonogenesis through the regulation of NTRK1 and the downstream ERK1/ERK2 signaling cascade. May be involved in the sorting or targeting of critical proteins involved in the initiating events of endocytosis at the plasma membrane. May play a role in Mg(2+) transport. Could also palmitoylate DNAJC5 and regulate its localization to the Golgi membrane. Palmitoylates CASP6, thereby preventing its dimerization and subsequent activation. This chain is Palmitoyltransferase ZDHHC17, found in Mus musculus (Mouse).